The sequence spans 501 residues: Glycoprotein 3-alpha-L-fucosyltransferase A (501 aa).

Residues 1 to 39 lie on the Cytoplasmic side of the membrane; that stretch reads MGVFSNLRGPKIGLTHEELPVVANGSTSSSSSPSSFKRK. The chain crosses the membrane as a helical; Signal-anchor for type II membrane protein span at residues 40–60; sequence VSTFLPICVALVVIIEIGFLC. Residues 61–501 lie on the Lumenal side of the membrane; sequence RLDNASLVDT…PCPKFEVVFV (441 aa). N-linked (GlcNAc...) asparagine glycosylation is found at asparagine 64, asparagine 337, asparagine 420, and asparagine 481.

The protein belongs to the glycosyltransferase 10 family. Mg(2+) serves as cofactor. Requires Mn(2+) as cofactor. In terms of processing, glycosylation may be important for enzymatic activity.

It localises to the golgi apparatus. The protein resides in the golgi stack membrane. It catalyses the reaction N(4)-{beta-D-GlcNAc-(1-&gt;2)-alpha-D-Man-(1-&gt;3)-[beta-D-GlcNAc-(1-&gt;2)-alpha-D-Man-(1-&gt;6)]-beta-D-Man-(1-&gt;4)-beta-D-GlcNAc-(1-&gt;4)-beta-D-GlcNAc}-L-asparaginyl-[protein] + GDP-beta-L-fucose = N(4)-{beta-D-GlcNAc-(1-&gt;2)-alpha-D-Man-(1-&gt;3)-[beta-D-GlcNAc-(1-&gt;2)-alpha-D-Man-(1-&gt;6)]-beta-D-Man-(1-&gt;4)-beta-D-GlcNAc-(1-&gt;4)-[alpha-L-Fuc(1-&gt;3)]-beta-D-GlcNAc}-L-asparaginyl-[protein] + GDP + H(+). It participates in protein modification; protein glycosylation. With respect to regulation, inhibited by Cu(2+) and Zn(2+). Involved in cell wall synthesis. Preferentially catalyzes the addition of fucose in alpha 1-3 linkage to the first GlcNAc residue next to the peptide chains in N-glycans. The sequence is that of Glycoprotein 3-alpha-L-fucosyltransferase A (FUT11) from Arabidopsis thaliana (Mouse-ear cress).